A 725-amino-acid polypeptide reads, in one-letter code: Glyoxysomal fatty acid beta-oxidation multifunctional protein MFP-a (725 aa).

The Nucleophile role is filled by E119. The active-site Proton acceptor is E139. A Microbody targeting signal motif is present at residues 723-725 (SRL).

It in the N-terminal section; belongs to the enoyl-CoA hydratase/isomerase family. This sequence in the central section; belongs to the 3-hydroxyacyl-CoA dehydrogenase family.

It is found in the glyoxysome. The enzyme catalyses a (3S)-3-hydroxyacyl-CoA = a (2E)-enoyl-CoA + H2O. The catalysed reaction is a 4-saturated-(3S)-3-hydroxyacyl-CoA = a (3E)-enoyl-CoA + H2O. It catalyses the reaction a (3Z)-enoyl-CoA = a 4-saturated (2E)-enoyl-CoA. It carries out the reaction a (3E)-enoyl-CoA = a 4-saturated (2E)-enoyl-CoA. The enzyme catalyses (3S)-3-hydroxybutanoyl-CoA = (3R)-3-hydroxybutanoyl-CoA. The catalysed reaction is a (3S)-3-hydroxyacyl-CoA + NAD(+) = a 3-oxoacyl-CoA + NADH + H(+). Its pathway is lipid metabolism; fatty acid beta-oxidation. This chain is Glyoxysomal fatty acid beta-oxidation multifunctional protein MFP-a, found in Brassica napus (Rape).